A 246-amino-acid chain; its full sequence is Heavy metal-associated isoprenylated plant protein 8 (246 aa).

Residues 1–31 (MGKNKQNGESDNKSEKKNQKNGDSSVDKSDK) form a disordered region. Residues 35–99 (CKEIVLKVYM…RVQKKFSRNA (65 aa)) form the HMA 1 domain. A metal cation is bound by residues C46 and C49. Residues 96-122 (SRNAEMISPKHNPKQDQKEPQQKKESA) are disordered. Over residues 108-122 (PKQDQKEPQQKKESA) the composition is skewed to basic and acidic residues. The HMA 2 domain occupies 125-189 (IKTAILRMNM…IKKKLGKHAE (65 aa)). Residues C136 and C139 each contribute to the a metal cation site. Residues 191 to 226 (LSQITEKGKDNNKKNNNKKEESDGNKIFSYPPQYSS) form a disordered region. Residues 196–214 (EKGKDNNKKNNNKKEESDG) are compositionally biased toward basic and acidic residues. C243 carries the post-translational modification Cysteine methyl ester. C243 is lipidated: S-farnesyl cysteine. Positions 244–246 (SIM) are cleaved as a propeptide — removed in mature form.

It belongs to the HIPP family.

In terms of biological role, heavy-metal-binding protein. This is Heavy metal-associated isoprenylated plant protein 8 from Arabidopsis thaliana (Mouse-ear cress).